The chain runs to 122 residues: Large ribosomal subunit protein uL14 (122 aa).

The protein belongs to the universal ribosomal protein uL14 family. Part of the 50S ribosomal subunit. Forms a cluster with proteins L3 and L19. In the 70S ribosome, L14 and L19 interact and together make contacts with the 16S rRNA in bridges B5 and B8.

Its function is as follows. Binds to 23S rRNA. Forms part of two intersubunit bridges in the 70S ribosome. The polypeptide is Large ribosomal subunit protein uL14 (Pseudoalteromonas translucida (strain TAC 125)).